A 496-amino-acid chain; its full sequence is GTPase Der (496 aa).

EngA-type G domains are found at residues 3 to 166 and 209 to 382; these read PVIA…VGKF and VKLA…TCAT. Residues 9–16, 56–60, 118–121, 215–222, 262–266, and 327–330 each bind GTP; these read GRPNVGKS, DTGGI, NKTD, DTAGV, and NKWD. In terms of domain architecture, KH-like spans 383–467; it reads RRVGTSMLTR…PIRIQFKEGE (85 aa).

Belongs to the TRAFAC class TrmE-Era-EngA-EngB-Septin-like GTPase superfamily. EngA (Der) GTPase family. Associates with the 50S ribosomal subunit.

In terms of biological role, GTPase that plays an essential role in the late steps of ribosome biogenesis. The sequence is that of GTPase Der from Proteus mirabilis (strain HI4320).